A 101-amino-acid polypeptide reads, in one-letter code: NAD(P)H-quinone oxidoreductase subunit 4L, chloroplastic (101 aa).

The next 3 helical transmembrane spans lie at 2-22 (ILEH…YGLI), 32-52 (MCLE…SDFF), and 61-81 (IFCI…LAIV).

Belongs to the complex I subunit 4L family. In terms of assembly, NDH is composed of at least 16 different subunits, 5 of which are encoded in the nucleus.

It is found in the plastid. Its subcellular location is the chloroplast thylakoid membrane. It carries out the reaction a plastoquinone + NADH + (n+1) H(+)(in) = a plastoquinol + NAD(+) + n H(+)(out). It catalyses the reaction a plastoquinone + NADPH + (n+1) H(+)(in) = a plastoquinol + NADP(+) + n H(+)(out). In terms of biological role, NDH shuttles electrons from NAD(P)H:plastoquinone, via FMN and iron-sulfur (Fe-S) centers, to quinones in the photosynthetic chain and possibly in a chloroplast respiratory chain. The immediate electron acceptor for the enzyme in this species is believed to be plastoquinone. Couples the redox reaction to proton translocation, and thus conserves the redox energy in a proton gradient. This is NAD(P)H-quinone oxidoreductase subunit 4L, chloroplastic from Arabis hirsuta (Hairy rock-cress).